The sequence spans 115 residues: Replication initiation control protein YabA (115 aa).

Zn(2+) contacts are provided by His-90, Cys-92, Cys-106, and Cys-109.

It belongs to the YabA family. Homotetramer. Interacts with both DnaA and DnaN, acting as a bridge between these two proteins. It depends on Zn(2+) as a cofactor.

It is found in the cytoplasm. It localises to the nucleoid. In terms of biological role, involved in control of chromosome replication initiation. Inhibits the cooperative binding of DnaA to the oriC region, thus negatively regulating initiation of chromosome replication. Inhibits the ability of DnaA-ATP to form a helix on DNA; does not disassemble preformed DnaA-DNA helices. Decreases the residence time of DnaA on the chromosome at its binding sites (oriC, replication forks and promoter-binding sites). Tethers DnaA to the replication machinery via the DNA polymerase beta sliding clamp subunit (dnaN). Associates with oriC and other DnaA targets on the chromosome in a DnaA-dependent manner. This chain is Replication initiation control protein YabA, found in Staphylococcus aureus (strain bovine RF122 / ET3-1).